The chain runs to 277 residues: Sulfur carrier protein FdhD (277 aa).

Catalysis depends on C121, which acts as the Cysteine persulfide intermediate. 260 to 265 (FCKPGR) lines the Mo-bis(molybdopterin guanine dinucleotide) pocket.

It belongs to the FdhD family.

It localises to the cytoplasm. Its function is as follows. Required for formate dehydrogenase (FDH) activity. Acts as a sulfur carrier protein that transfers sulfur from IscS to the molybdenum cofactor prior to its insertion into FDH. In Escherichia coli O8 (strain IAI1), this protein is Sulfur carrier protein FdhD.